The following is a 171-amino-acid chain: Small ribosomal subunit protein uS5 (171 aa).

In terms of domain architecture, S5 DRBM spans 16-79 (LIEKIVFINR…ERARKDMALV (64 aa)).

The protein belongs to the universal ribosomal protein uS5 family. As to quaternary structure, part of the 30S ribosomal subunit. Contacts proteins S4 and S8.

In terms of biological role, with S4 and S12 plays an important role in translational accuracy. Functionally, located at the back of the 30S subunit body where it stabilizes the conformation of the head with respect to the body. The sequence is that of Small ribosomal subunit protein uS5 from Desulfotalea psychrophila (strain LSv54 / DSM 12343).